The following is a 158-amino-acid chain: NAD(P)H-quinone oxidoreductase subunit N (158 aa).

It belongs to the complex I NdhN subunit family. NDH-1 can be composed of about 15 different subunits; different subcomplexes with different compositions have been identified which probably have different functions.

Its subcellular location is the cellular thylakoid membrane. The catalysed reaction is a plastoquinone + NADH + (n+1) H(+)(in) = a plastoquinol + NAD(+) + n H(+)(out). The enzyme catalyses a plastoquinone + NADPH + (n+1) H(+)(in) = a plastoquinol + NADP(+) + n H(+)(out). NDH-1 shuttles electrons from an unknown electron donor, via FMN and iron-sulfur (Fe-S) centers, to quinones in the respiratory and/or the photosynthetic chain. The immediate electron acceptor for the enzyme in this species is believed to be plastoquinone. Couples the redox reaction to proton translocation, and thus conserves the redox energy in a proton gradient. Cyanobacterial NDH-1 also plays a role in inorganic carbon-concentration. The sequence is that of NAD(P)H-quinone oxidoreductase subunit N from Prochlorococcus marinus (strain MIT 9301).